The sequence spans 305 residues: Thymidylate synthase (305 aa).

DUMP is bound by residues Arg-26 and Arg-160–Arg-161. The Nucleophile role is filled by Cys-180. DUMP contacts are provided by residues Arg-207–Asp-210, Asn-218, and His-248–Tyr-250. Position 210 (Asp-210) interacts with (6R)-5,10-methylene-5,6,7,8-tetrahydrofolate. A (6R)-5,10-methylene-5,6,7,8-tetrahydrofolate-binding site is contributed by Ala-304.

It belongs to the thymidylate synthase family. Bacterial-type ThyA subfamily. In terms of assembly, homodimer.

It localises to the cytoplasm. The catalysed reaction is dUMP + (6R)-5,10-methylene-5,6,7,8-tetrahydrofolate = 7,8-dihydrofolate + dTMP. The protein operates within pyrimidine metabolism; dTTP biosynthesis. In terms of biological role, catalyzes the reductive methylation of 2'-deoxyuridine-5'-monophosphate (dUMP) to 2'-deoxythymidine-5'-monophosphate (dTMP) while utilizing 5,10-methylenetetrahydrofolate (mTHF) as the methyl donor and reductant in the reaction, yielding dihydrofolate (DHF) as a by-product. This enzymatic reaction provides an intracellular de novo source of dTMP, an essential precursor for DNA biosynthesis. The protein is Thymidylate synthase of Sinorhizobium fredii (strain NBRC 101917 / NGR234).